A 356-amino-acid chain; its full sequence is DNA polymerase IV (356 aa).

The UmuC domain occupies 6-187; it reads IIHIDMDYFF…LDIGDFPGVG (182 aa). Positions 10 and 105 each coordinate Mg(2+). Glu106 is a catalytic residue.

It belongs to the DNA polymerase type-Y family. Monomer. It depends on Mg(2+) as a cofactor.

It is found in the cytoplasm. The catalysed reaction is DNA(n) + a 2'-deoxyribonucleoside 5'-triphosphate = DNA(n+1) + diphosphate. Functionally, poorly processive, error-prone DNA polymerase involved in untargeted mutagenesis. Copies undamaged DNA at stalled replication forks, which arise in vivo from mismatched or misaligned primer ends. These misaligned primers can be extended by PolIV. Exhibits no 3'-5' exonuclease (proofreading) activity. May be involved in translesional synthesis, in conjunction with the beta clamp from PolIII. The polypeptide is DNA polymerase IV (Staphylococcus aureus (strain COL)).